Reading from the N-terminus, the 203-residue chain is Imidazoleglycerol-phosphate dehydratase (203 aa).

The protein belongs to the imidazoleglycerol-phosphate dehydratase family.

The protein resides in the cytoplasm. It carries out the reaction D-erythro-1-(imidazol-4-yl)glycerol 3-phosphate = 3-(imidazol-4-yl)-2-oxopropyl phosphate + H2O. It functions in the pathway amino-acid biosynthesis; L-histidine biosynthesis; L-histidine from 5-phospho-alpha-D-ribose 1-diphosphate: step 6/9. The protein is Imidazoleglycerol-phosphate dehydratase of Salinispora arenicola (strain CNS-205).